We begin with the raw amino-acid sequence, 91 residues long: Bacterial microcompartment shell protein PduJ (91 aa).

A BMC domain is found at 4–88 (ALGLVETKGL…PHSDVEAILP (85 aa)).

It belongs to the bacterial microcompartments protein family. Homohexamer with a central pore of about 5.7 Angstroms in diameter. Interacts with PduP, which targets PduP to the BMC.

It is found in the bacterial microcompartment. It participates in polyol metabolism; 1,2-propanediol degradation. Functionally, one of the major shell proteins of the bacterial microcompartment (BMC) dedicated to 1,2-propanediol (1,2-PD) degradation. The isolated BMC shell component protein ratio for J:A:B':B:K:T:U is approximately 15:10:7:6:1:1:2. At least one of PduA or PduJ is required for BMC assembly; it must be encoded as the first gene in the pdu operon. Required for structural integrity of BMCs and to mitigate propionaldehyde toxicity, probably joins facets responsible for BMC closure. Edge residues (particularly Lys-25) are important for function and assembly of the BMC. 80% identical to PduA; although their pore regions appear structurally identical, unlike PduA plays no role in 1,2-PD diffusion into or out of the BMC shell. If pduJ is cloned in the chromosomal position of pduA it is able to complement a pduA deletion; it then has a functional pore as it assumes the transport functions of PduA. Overexpression of this protein leads to aberrant filaments that extend the length of the cell, cross the cleavage furrow and impair division. The filaments form nanotubes with a hollow center. Modeling suggests PduJ is probably the hub for binding multiple enzymes to the interior of the BMC; modeling suggests PduC, PduD, PduG and PduM are targeted to PduJ. In terms of biological role, the 1,2-propanediol (1,2-PD) degradation bacterial microcompartment (BMC) concentrates low levels of 1,2-PD catabolic enzymes, concentrates volatile reaction intermediates thus enhancing pathway flux and keeps the level of toxic, mutagenic propionaldehyde low. The polypeptide is Bacterial microcompartment shell protein PduJ (Salmonella typhimurium (strain LT2 / SGSC1412 / ATCC 700720)).